The chain runs to 937 residues: Periplasmic nitrate reductase (937 aa).

Residues Met-1–Ala-42 constitute a signal peptide (tat-type signal). One can recognise a 4Fe-4S Mo/W bis-MGD-type domain in the interval Trp-49 to Asp-110. 4 residues coordinate [4Fe-4S] cluster: Cys-56, Cys-59, Cys-63, and Cys-96. Residues Lys-98, Gln-166, Asn-191, Cys-195, Trp-228 to Met-235, Met-433, Gln-437, Asn-543, Ser-568 to Glu-569, Lys-591, Asp-618, and Thr-827 to Ser-836 contribute to the Mo-bis(molybdopterin guanine dinucleotide) site. Residue Trp-903 coordinates substrate. Residues Asn-911 and Lys-928 each contribute to the Mo-bis(molybdopterin guanine dinucleotide) site.

Belongs to the prokaryotic molybdopterin-containing oxidoreductase family. NasA/NapA/NarB subfamily. As to quaternary structure, component of the periplasmic nitrate reductase NapAB complex composed of NapA and NapB. [4Fe-4S] cluster serves as cofactor. The cofactor is Mo-bis(molybdopterin guanine dinucleotide). Predicted to be exported by the Tat system. The position of the signal peptide cleavage has not been experimentally proven.

The protein resides in the periplasm. The enzyme catalyses 2 Fe(II)-[cytochrome] + nitrate + 2 H(+) = 2 Fe(III)-[cytochrome] + nitrite + H2O. Catalytic subunit of the periplasmic nitrate reductase complex NapAB. Receives electrons from NapB and catalyzes the reduction of nitrate to nitrite. In Helicobacter hepaticus (strain ATCC 51449 / 3B1), this protein is Periplasmic nitrate reductase.